The sequence spans 352 residues: Holliday junction branch migration complex subunit RuvB (352 aa).

Positions 13–201 (FSFRKKELRL…FGISQKIEFY (189 aa)) are large ATPase domain (RuvB-L). ATP-binding positions include arginine 41, glycine 82, lysine 85, threonine 86, threonine 87, 148-150 (EDF), arginine 191, tyrosine 201, and arginine 238. A Mg(2+)-binding site is contributed by threonine 86. The segment at 202 to 273 (TCDELKQIIV…LIKKALNSYQ (72 aa)) is small ATPAse domain (RuvB-S). The tract at residues 276–352 (EKGLDSLDRH…KYIDSKDDNF (77 aa)) is head domain (RuvB-H). Residues arginine 330 and arginine 335 each coordinate DNA.

This sequence belongs to the RuvB family. Homohexamer. Forms an RuvA(8)-RuvB(12)-Holliday junction (HJ) complex. HJ DNA is sandwiched between 2 RuvA tetramers; dsDNA enters through RuvA and exits via RuvB. An RuvB hexamer assembles on each DNA strand where it exits the tetramer. Each RuvB hexamer is contacted by two RuvA subunits (via domain III) on 2 adjacent RuvB subunits; this complex drives branch migration. In the full resolvosome a probable DNA-RuvA(4)-RuvB(12)-RuvC(2) complex forms which resolves the HJ.

Its subcellular location is the cytoplasm. It carries out the reaction ATP + H2O = ADP + phosphate + H(+). Its function is as follows. The RuvA-RuvB-RuvC complex processes Holliday junction (HJ) DNA during genetic recombination and DNA repair, while the RuvA-RuvB complex plays an important role in the rescue of blocked DNA replication forks via replication fork reversal (RFR). RuvA specifically binds to HJ cruciform DNA, conferring on it an open structure. The RuvB hexamer acts as an ATP-dependent pump, pulling dsDNA into and through the RuvAB complex. RuvB forms 2 homohexamers on either side of HJ DNA bound by 1 or 2 RuvA tetramers; 4 subunits per hexamer contact DNA at a time. Coordinated motions by a converter formed by DNA-disengaged RuvB subunits stimulates ATP hydrolysis and nucleotide exchange. Immobilization of the converter enables RuvB to convert the ATP-contained energy into a lever motion, pulling 2 nucleotides of DNA out of the RuvA tetramer per ATP hydrolyzed, thus driving DNA branch migration. The RuvB motors rotate together with the DNA substrate, which together with the progressing nucleotide cycle form the mechanistic basis for DNA recombination by continuous HJ branch migration. Branch migration allows RuvC to scan DNA until it finds its consensus sequence, where it cleaves and resolves cruciform DNA. The chain is Holliday junction branch migration complex subunit RuvB from Prochlorococcus marinus (strain AS9601).